We begin with the raw amino-acid sequence, 70 residues long: Metallothionein-like protein 1 (70 aa).

The protein belongs to the metallothionein superfamily. Type 15 family.

Functionally, metallothioneins have a high content of cysteine residues that bind various heavy metals. This chain is Metallothionein-like protein 1 (MT1), found in Festuca rubra (Red fescue).